We begin with the raw amino-acid sequence, 122 residues long: RxLR effector protein Avh52 (122 aa).

Residues 1-21 (MRLTSILVLVIAATFHTTGTA) form the signal peptide. Positions 50 to 68 (RLLRRVEKDKVDYEQDEQR) match the RxLR-dEER motif. The TAP1-binding stretch occupies residues 69 to 86 (SFGALKDAVKKLNPVTAV). The tract at residues 87–98 (KKFFKQRAKRKK) is nuclear localization signal (NLS).

The protein belongs to the RxLR effector family. In terms of assembly, interacts with host acetyl transferase TAP1.

The protein localises to the secreted. The protein resides in the host nucleus. In terms of biological role, effector that suppresses plant defense responses during the early stages of pathogen infection. Suppresses cell death induced by effectors and PAMPs in plant hosts. Interacts with host acetyltransferase TAP1 and causes TAP1 relocation into the nucleus where it acetylates histones H2A and H3 during early infection, thereby promoting susceptibility of host plant to P.sojae. In Phytophthora sojae (strain P6497) (Soybean stem and root rot agent), this protein is RxLR effector protein Avh52.